Reading from the N-terminus, the 440-residue chain is Xylose isomerase (440 aa).

Active-site residues include histidine 101 and aspartate 104. Mg(2+) contacts are provided by glutamate 232, glutamate 268, histidine 271, aspartate 296, aspartate 307, aspartate 309, and aspartate 339.

The protein belongs to the xylose isomerase family. As to quaternary structure, homotetramer. The cofactor is Mg(2+).

The protein resides in the cytoplasm. The enzyme catalyses alpha-D-xylose = alpha-D-xylulofuranose. This is Xylose isomerase from Cronobacter sakazakii (strain ATCC BAA-894) (Enterobacter sakazakii).